A 525-amino-acid polypeptide reads, in one-letter code: GMP synthase [glutamine-hydrolyzing] (525 aa).

The Glutamine amidotransferase type-1 domain occupies Lys8–Asn207. The active-site Nucleophile is the Cys85. Catalysis depends on residues His181 and Glu183. Residues Trp208 to Arg400 enclose the GMPS ATP-PPase domain. Ser235–Ser241 serves as a coordination point for ATP.

In terms of assembly, homodimer.

The enzyme catalyses XMP + L-glutamine + ATP + H2O = GMP + L-glutamate + AMP + diphosphate + 2 H(+). It participates in purine metabolism; GMP biosynthesis; GMP from XMP (L-Gln route): step 1/1. In terms of biological role, catalyzes the synthesis of GMP from XMP. This chain is GMP synthase [glutamine-hydrolyzing], found in Shewanella halifaxensis (strain HAW-EB4).